Here is a 1079-residue protein sequence, read N- to C-terminus: Electrogenic sodium bicarbonate cotransporter 1 (1079 aa).

Residues 1 to 62 are required for interaction with AHCYL1; it reads MEDEAALDRG…EKKEKERVSE (62 aa). The Cytoplasmic segment spans residues 1-466; it reads MEDEAALDRG…FASDFYDALN (466 aa). Y30 is modified (phosphotyrosine). Residues 39–52 are compositionally biased toward basic residues; it reads YRRRRRHKRKAGHR. Positions 39–78 are disordered; sequence YRRRRRHKRKAGHREKKEKERVSENYSDKSDVENADESSS. Positions 53 to 70 are enriched in basic and acidic residues; that stretch reads EKKEKERVSENYSDKSDV. 7 positions are modified to phosphoserine: S61, S65, S68, S223, S232, S233, and S245. A disordered region spans residues 238 to 265; the sequence is FTSPENGSPAMTHRNLTSSSLNDISDKP. T249 and T254 each carry phosphothreonine. The span at 251–260 shows a compositional bias: polar residues; it reads RNLTSSSLND. S256, S257, and S262 each carry phosphoserine. Residues 467 to 491 traverse the membrane as a helical segment; that stretch reads IQALSAILFIYLATVTNAITFGGLL. At 492 to 501 the chain is on the extracellular side; the sequence is GDATDNMQGV. The chain crosses the membrane as a helical span at residues 502-520; that stretch reads LESFLGTAVSGAVFCLFAG. A topological domain (cytoplasmic) is located at residue Q521. A discontinuously helical membrane pass occupies residues 522-542; it reads PLTILSSTGPVLVFERLLFNF. At 543–550 the chain is on the extracellular side; sequence SKDHNFDY. Residues 551–571 form a helical membrane-spanning segment; sequence LEFRLWIGLWSAFLCLILVAT. Residues 572 to 585 are Cytoplasmic-facing; sequence DASFLVQYFTRFTE. A helical transmembrane segment spans residues 586–609; that stretch reads EGFSSLISFIFIYDAFKKMIKLAD. Over 610–692 the chain is Extracellular; it reads YYPINSNFKV…GNNCDFVPDI (83 aa). The helical transmembrane segment at 693–710 threads the bilayer; sequence TLMSFILFLGTYTSSMAL. At 711-725 the chain is on the cytoplasmic side; sequence KKFKTSRYFPTTARK. Residues 726-745 form a helical membrane-spanning segment; that stretch reads LISDFAIILSILIFCVIDAL. At 746-779 the chain is on the extracellular side; that stretch reads VGVDTPKLIVPSEFKPTSPNRGWFVPPFGGNPWW. The interval 748–779 is interaction with CA4; sequence VDTPKLIVPSEFKPTSPNRGWFVPPFGGNPWW. Residues 780–807 form a helical membrane-spanning segment; the sequence is VYLAAAIPALLVTILIFMDQQITAVIVN. At 808–819 the chain is on the cytoplasmic side; it reads RKEHKLKKGAGY. Residues 820–836 traverse the membrane as a helical segment; the sequence is HLDLFWVAILMVVCSFM. Residue A837 is a topological domain, extracellular. The chain crosses the membrane as a discontinuously helical span at residues 838 to 855; it reads LPWYVAATVISIAHIDSL. At 856-877 the chain is on the cytoplasmic side; that stretch reads KMETETSAPGEQPKFLGVREQR. A helical transmembrane segment spans residues 878–894; the sequence is VTGTLVFILTGLSVFMA. Residues 895–901 lie on the Extracellular side of the membrane; sequence PILKFIP. Residues 902 to 918 form a helical membrane-spanning segment; it reads MPVLYGVFLYMGVASLN. The Cytoplasmic segment spans residues 919–960; that stretch reads GVQFMDRLKLLLMPLKHQPDFIYLRHVPLRRVHLFTFLQVLC. The segment at residues 961 to 986 is an intramembrane region (discontinuously helical); sequence LALLWILKSTVAAIIFPVMILALVAV. Topologically, residues 987 to 1079 are cytoplasmic; it reads RKGMDYLFSQ…PTFLERHTSC (93 aa). The segment at 1002-1004 is CA2-binding; that stretch reads LDD. A disordered region spans residues 1012–1079; the sequence is KKKEDEKKKK…PTFLERHTSC (68 aa). Position 1026 is a phosphoserine; by PKA (S1026). S1029 carries the phosphoserine modification. A CA2-binding region spans residues 1030–1033; sequence DSDD. Phosphoserine is present on residues S1034 and S1044. Positions 1057 to 1059 are required for basolateral targeting; that stretch reads FLS. Positions 1062-1079 are enriched in basic and acidic residues; the sequence is KPSDRERSPTFLERHTSC. S1069 carries the phosphoserine modification.

Belongs to the anion exchanger (TC 2.A.31) family. In terms of assembly, homodimer. Interacts with CA2/carbonic anhydrase 2 and CA4/carbonic anhydrase 4 which may regulate transporter activity. Isoform 1 but not isoform 2 interacts with AHCYL1 (via PEST domain when phosphorylated); the interaction increases SLC4A4 isoform 1 activity. Interacts with AHCYL2. Phosphorylation of Ser-1026 by PKA increases the binding of CA2 and changes the Na(+):HCO3(-) stoichiometry of the transporter from 3:1 to 2:1. Phosphorylated in presence of STK39 and dephosphorylated in presence of PP1 phosphatase; phosphorylation seems to inhibit SLC4A4 activity. Post-translationally, N-glycosylated. May not be necessary for the transporter basic functions. Expressed in vas deferens epithelia (at protein level).

The protein localises to the basolateral cell membrane. Its subcellular location is the cell membrane. The enzyme catalyses 2 hydrogencarbonate(out) + Na(+)(out) = 2 hydrogencarbonate(in) + Na(+)(in). It carries out the reaction 3 hydrogencarbonate(out) + Na(+)(out) = 3 hydrogencarbonate(in) + Na(+)(in). Electrogenic sodium/bicarbonate cotransporter with a Na(+):HCO3(-) stoichiometry varying from 1:2 to 1:3. May regulate bicarbonate influx/efflux at the basolateral membrane of cells and regulate intracellular pH. The sequence is that of Electrogenic sodium bicarbonate cotransporter 1 (SLC4A4) from Sus scrofa (Pig).